The primary structure comprises 606 residues: Aspartate--tRNA(Asp/Asn) ligase (606 aa).

Glu-196 is an L-aspartate binding site. Residues Gln-220–Lys-223 are aspartate. Arg-242 is a binding site for L-aspartate. Residues Arg-242–Glu-244 and Gln-251 contribute to the ATP site. His-465 contacts L-aspartate. Glu-499 provides a ligand contact to ATP. Arg-506 provides a ligand contact to L-aspartate. Gly-551 to Arg-554 contributes to the ATP binding site.

Belongs to the class-II aminoacyl-tRNA synthetase family. Type 1 subfamily. Homodimer.

The protein resides in the cytoplasm. The catalysed reaction is tRNA(Asx) + L-aspartate + ATP = L-aspartyl-tRNA(Asx) + AMP + diphosphate. In terms of biological role, aspartyl-tRNA synthetase with relaxed tRNA specificity since it is able to aspartylate not only its cognate tRNA(Asp) but also tRNA(Asn). Reaction proceeds in two steps: L-aspartate is first activated by ATP to form Asp-AMP and then transferred to the acceptor end of tRNA(Asp/Asn). In Oleidesulfovibrio alaskensis (strain ATCC BAA-1058 / DSM 17464 / G20) (Desulfovibrio alaskensis), this protein is Aspartate--tRNA(Asp/Asn) ligase.